The primary structure comprises 578 residues: MIQGVIQKIAGPAVIAKGMLGARMYDICKVGEEGLVGEIIRLDGDTAFVQVYEDTSGLKVGEPVVSTGLPLAVELGPGMLNGIYDGIQRPLERIREKTGIYITRGVVVHALDREKKWAWTPMVKPGDEVRGGMVLGTVPEFSFTHKILVPPDVRGRVKEVKPAGEYTVEEPVVVLEDGTELKMYHTWPVRRARPVQRKLDPNTPFLTGMRILDVLFPVAMGGTAAIPGPFGSGKTVTQQSLAKWSNADVVVYVGCGERGNEMTDVLVEFPELTDPKTGGPLMHRTVLIANTSNMPVAAREASIYVGVTIAEYFRDQGFSVALMADSTSRWAEALREISSRLEEMPAEEGYPPYLAARLAAFYERAGKVITLGGEEGAVTIVGAVSPPGGDMSEPVTQSTLRIVGAFWRLDASLAFRRHFPAINWNGSYSLFTSALDPWYRENVAEDYPELRDAISELLQREAGLQEIVQLVGPDALQDAERLVIEVGRIIREDFLQQNAFHEVDAYCSMRKAYGIMKMILAFYKEAEAAIKRGVSIDEILQLPVVERIGRARYVSEEEFPAYFEEAMKEIQGAFKALA.

Residue 228–235 (GPFGSGKT) coordinates ATP.

It belongs to the ATPase alpha/beta chains family.

The enzyme catalyses ATP + H2O + 4 H(+)(in) = ADP + phosphate + 5 H(+)(out). Produces ATP from ADP in the presence of a proton gradient across the membrane. The V-type alpha chain is a catalytic subunit. In Thermus thermophilus (strain ATCC BAA-163 / DSM 7039 / HB27), this protein is V-type ATP synthase alpha chain.